The sequence spans 151 residues: NADPH-dependent 7-cyano-7-deazaguanine reductase (151 aa).

The Thioimide intermediate role is filled by Cys49. The active-site Proton donor is the Asp56. Substrate is bound by residues 71-73 and 90-91; these read IES and HE.

Belongs to the GTP cyclohydrolase I family. QueF type 1 subfamily.

The protein localises to the cytoplasm. The catalysed reaction is 7-aminomethyl-7-carbaguanine + 2 NADP(+) = 7-cyano-7-deazaguanine + 2 NADPH + 3 H(+). It participates in tRNA modification; tRNA-queuosine biosynthesis. In terms of biological role, catalyzes the NADPH-dependent reduction of 7-cyano-7-deazaguanine (preQ0) to 7-aminomethyl-7-deazaguanine (preQ1). This Caulobacter vibrioides (strain ATCC 19089 / CIP 103742 / CB 15) (Caulobacter crescentus) protein is NADPH-dependent 7-cyano-7-deazaguanine reductase.